Consider the following 905-residue polypeptide: DNA-directed RNA polymerase subunit Rpo1N (905 aa).

Residues Cys60, Cys63, Cys70, His73, Cys100, Cys103, Cys147, and Cys150 each contribute to the Zn(2+) site. Mg(2+) is bound by residues Asp461, Asp463, and Asp465.

The protein belongs to the RNA polymerase beta' chain family. Part of the RNA polymerase complex. Mg(2+) serves as cofactor. It depends on Zn(2+) as a cofactor.

The protein localises to the cytoplasm. It catalyses the reaction RNA(n) + a ribonucleoside 5'-triphosphate = RNA(n+1) + diphosphate. In terms of biological role, DNA-dependent RNA polymerase (RNAP) catalyzes the transcription of DNA into RNA using the four ribonucleoside triphosphates as substrates. Forms the clamp head domain. The chain is DNA-directed RNA polymerase subunit Rpo1N from Thermococcus celer.